Reading from the N-terminus, the 177-residue chain is Protein YOP1 (177 aa).

At 1 to 35 (MADVISSLQTQLKELDTKFAGNNVLNQLEQRTNLP) the chain is on the cytoplasmic side. The chain crosses the membrane as a helical span at residues 36 to 55 (KSYLVVGSTIFYLLLIFINV). Residues 56–57 (GG) lie on the Lumenal side of the membrane. The helical transmembrane segment at 58–78 (IGEILGNFAGFVIPAYYSILA) threads the bilayer. The Cytoplasmic segment spans residues 79-88 (LKTTTTKDDT). The chain crosses the membrane as a helical span at residues 89 to 103 (QLLTYWIVFSFLNVI). Over 104–108 (EFWSK) the chain is Lumenal. Residues 109-127 (ALLYIIPFYWFLKTIFLLY) form a helical membrane-spanning segment. At 128–177 (IALPQTGGATMIYNRFISPLTDKYILGPKKTDGVQQSVKEASRATGAATH) the chain is on the cytoplasmic side.

It belongs to the DP1 family. As to quaternary structure, oligomer.

Its subcellular location is the endoplasmic reticulum membrane. The protein localises to the golgi apparatus membrane. Functionally, required to generate and maintain the structure of the tubular endoplasmic reticulum network and the vacuole. Induces high curvature in membranes and causes membrane tubule formation. Involved in membrane/vesicle trafficking. In Candida glabrata (strain ATCC 2001 / BCRC 20586 / JCM 3761 / NBRC 0622 / NRRL Y-65 / CBS 138) (Yeast), this protein is Protein YOP1 (YOP1).